A 153-amino-acid chain; its full sequence is Large ribosomal subunit protein uL13 (153 aa).

It belongs to the universal ribosomal protein uL13 family. Part of the 50S ribosomal subunit.

Its function is as follows. This protein is one of the early assembly proteins of the 50S ribosomal subunit, although it is not seen to bind rRNA by itself. It is important during the early stages of 50S assembly. This chain is Large ribosomal subunit protein uL13, found in Xanthobacter autotrophicus (strain ATCC BAA-1158 / Py2).